We begin with the raw amino-acid sequence, 374 residues long: uncharacterized protein (374 aa).

The signal sequence occupies residues 1 to 21 (MSIISRVCIPCAVLLFAQLHA). The Fibronectin type-III domain maps to 22-102 (KELVHVSQLK…ASASAWTSLS (81 aa)).

This is an uncharacterized protein from Treponema pallidum (strain Nichols).